The chain runs to 388 residues: uncharacterized protein (388 aa).

8 consecutive transmembrane segments (helical) span residues 15 to 37 (VISA…LLVL), 97 to 119 (GFSK…VVFY), 129 to 151 (PIWG…TFLL), 158 to 175 (FIYI…FLSA), 179 to 196 (MMLA…VLFK), 203 to 225 (LAFW…YLSQ), 304 to 326 (IFIV…YIYF), and 347 to 369 (LLSV…DALL).

Its subcellular location is the cell membrane. This is an uncharacterized protein from Aquifex aeolicus (strain VF5).